Consider the following 293-residue polypeptide: Formamidopyrimidine-DNA glycosylase (293 aa).

Residue proline 2 is the Schiff-base intermediate with DNA of the active site. Glutamate 3 acts as the Proton donor in catalysis. Lysine 58 functions as the Proton donor; for beta-elimination activity in the catalytic mechanism. 3 residues coordinate DNA: histidine 104, arginine 123, and lysine 166. The FPG-type zinc-finger motif lies at 257–293 (AVYDRESEPCRTKGCGGVVKRFVQNGRSTFCCPKCQK). The active-site Proton donor; for delta-elimination activity is arginine 283.

This sequence belongs to the FPG family. In terms of assembly, monomer. Zn(2+) is required as a cofactor.

It catalyses the reaction Hydrolysis of DNA containing ring-opened 7-methylguanine residues, releasing 2,6-diamino-4-hydroxy-5-(N-methyl)formamidopyrimidine.. The catalysed reaction is 2'-deoxyribonucleotide-(2'-deoxyribose 5'-phosphate)-2'-deoxyribonucleotide-DNA = a 3'-end 2'-deoxyribonucleotide-(2,3-dehydro-2,3-deoxyribose 5'-phosphate)-DNA + a 5'-end 5'-phospho-2'-deoxyribonucleoside-DNA + H(+). Functionally, involved in base excision repair of DNA damaged by oxidation or by mutagenic agents. Acts as a DNA glycosylase that recognizes and removes damaged bases. Has a preference for oxidized purines, such as 7,8-dihydro-8-oxoguanine (8-oxoG). Has AP (apurinic/apyrimidinic) lyase activity and introduces nicks in the DNA strand. Cleaves the DNA backbone by beta-delta elimination to generate a single-strand break at the site of the removed base with both 3'- and 5'-phosphates. The sequence is that of Formamidopyrimidine-DNA glycosylase from Rhodopseudomonas palustris (strain BisA53).